The chain runs to 227 residues: Phosphoribosylformylglycinamidine synthase subunit PurQ (227 aa).

A Glutamine amidotransferase type-1 domain is found at 3 to 225; the sequence is FAVIVFPGSN…LKQWRETYVV (223 aa). Residue cysteine 86 is the Nucleophile of the active site. Catalysis depends on residues histidine 194 and glutamate 196.

Part of the FGAM synthase complex composed of 1 PurL, 1 PurQ and 2 PurS subunits.

It localises to the cytoplasm. It carries out the reaction N(2)-formyl-N(1)-(5-phospho-beta-D-ribosyl)glycinamide + L-glutamine + ATP + H2O = 2-formamido-N(1)-(5-O-phospho-beta-D-ribosyl)acetamidine + L-glutamate + ADP + phosphate + H(+). It catalyses the reaction L-glutamine + H2O = L-glutamate + NH4(+). Its pathway is purine metabolism; IMP biosynthesis via de novo pathway; 5-amino-1-(5-phospho-D-ribosyl)imidazole from N(2)-formyl-N(1)-(5-phospho-D-ribosyl)glycinamide: step 1/2. Its function is as follows. Part of the phosphoribosylformylglycinamidine synthase complex involved in the purines biosynthetic pathway. Catalyzes the ATP-dependent conversion of formylglycinamide ribonucleotide (FGAR) and glutamine to yield formylglycinamidine ribonucleotide (FGAM) and glutamate. The FGAM synthase complex is composed of three subunits. PurQ produces an ammonia molecule by converting glutamine to glutamate. PurL transfers the ammonia molecule to FGAR to form FGAM in an ATP-dependent manner. PurS interacts with PurQ and PurL and is thought to assist in the transfer of the ammonia molecule from PurQ to PurL. The sequence is that of Phosphoribosylformylglycinamidine synthase subunit PurQ from Bacillus cereus (strain Q1).